Consider the following 345-residue polypeptide: Heat-inducible transcription repressor HrcA (345 aa).

Belongs to the HrcA family.

Negative regulator of class I heat shock genes (grpE-dnaK-dnaJ and groELS operons). Prevents heat-shock induction of these operons. This chain is Heat-inducible transcription repressor HrcA, found in Lachnoclostridium phytofermentans (strain ATCC 700394 / DSM 18823 / ISDg) (Clostridium phytofermentans).